A 202-amino-acid polypeptide reads, in one-letter code: ATP-dependent Clp protease proteolytic subunit (202 aa).

S101 acts as the Nucleophile in catalysis. H126 is an active-site residue.

Belongs to the peptidase S14 family. In terms of assembly, component of the chloroplastic Clp protease core complex.

It localises to the plastid. Its subcellular location is the chloroplast stroma. It catalyses the reaction Hydrolysis of proteins to small peptides in the presence of ATP and magnesium. alpha-casein is the usual test substrate. In the absence of ATP, only oligopeptides shorter than five residues are hydrolyzed (such as succinyl-Leu-Tyr-|-NHMec, and Leu-Tyr-Leu-|-Tyr-Trp, in which cleavage of the -Tyr-|-Leu- and -Tyr-|-Trp bonds also occurs).. Its function is as follows. Cleaves peptides in various proteins in a process that requires ATP hydrolysis. Has a chymotrypsin-like activity. Plays a major role in the degradation of misfolded proteins. The protein is ATP-dependent Clp protease proteolytic subunit of Nuphar advena (Common spatterdock).